Consider the following 247-residue polypeptide: Oil body-associated protein 2B (247 aa).

Residues 1–28 (MASSDKVPVACPASSGDGKEPMGNPTKT) form a disordered region.

This sequence belongs to the OBAP family.

This is Oil body-associated protein 2B from Arabidopsis thaliana (Mouse-ear cress).